A 468-amino-acid polypeptide reads, in one-letter code: MVVALSFPEADPAMSPPSAPELHQDEAQVVEELAANGKHSLSWESPQGPGCGLQNTGNSCYLNAALQCLTHTPPLADYMLSQEHSQTCCSPEGCKMCAMEAHVTQSLLHTHSGDVMKPSQNLTSAFHKRKQEDAHEFLMFTLETMHESCLQVHRQSEPTSEDSSPIHDIFGGWWRSQIKCHHCQGTSYSYDPFLDIPLDISSVQSVKQALQDTEKAEELCGENSYYCGRCRQKKPASKTLKLYSAPKVLMLVLKRFSGSMGKKLDRKVSYPEFLDLKPYLSQPTGGPLPYALYAVLVHEGATCHSGHYFCCVKAGHGKWYKMDDTKVTSCDVTSVLNENAYVLFYVQQNDLKKGSINMPEGRIHEVLDAKYQLKKSGEKKHNKSPCTEDAGEPCENREKRSSKETSLGEGKVLQEQDHQKAGQKQENTKLTPQEQNHEKGGQNLRNTEGELDRLSGAIVVYQPICTAN.

The disordered stretch occupies residues 1–20 (MVVALSFPEADPAMSPPSAP). A USP domain is found at 51–348 (CGLQNTGNSC…NAYVLFYVQQ (298 aa)). The Nucleophile role is filled by Cys-60. His-307 functions as the Proton acceptor in the catalytic mechanism. Residues 374–449 (KKSGEKKHNK…GGQNLRNTEG (76 aa)) are disordered. Positions 394–403 (CENREKRSSK) are enriched in basic and acidic residues. Positions 422–434 (GQKQENTKLTPQE) are enriched in polar residues.

The protein belongs to the peptidase C19 family. USP17 subfamily. Post-translationally, ubiquitinated. As to expression, detected in brain, heart, liver, lung, kidney, ovary and spleen.

It catalyses the reaction Thiol-dependent hydrolysis of ester, thioester, amide, peptide and isopeptide bonds formed by the C-terminal Gly of ubiquitin (a 76-residue protein attached to proteins as an intracellular targeting signal).. Its activity is regulated as follows. Inhibited by ubiquitin aldehyde. Functionally, deubiquitinating enzyme that removes conjugated ubiquitin from specific proteins to regulate different cellular processes. The sequence is that of Ubiquitin carboxyl-terminal hydrolase 17-like protein B from Mus musculus (Mouse).